The chain runs to 209 residues: NAD(P)H-quinone oxidoreductase subunit I (209 aa).

2 consecutive 4Fe-4S ferredoxin-type domains span residues 55–84 (GRIH…VDYE) and 95–124 (NSYS…MTEE). C64, C67, C70, C74, C104, C107, C110, and C114 together coordinate [4Fe-4S] cluster.

This sequence belongs to the complex I 23 kDa subunit family. As to quaternary structure, NDH-1 is composed of at least 11 different subunits. Requires [4Fe-4S] cluster as cofactor.

The protein resides in the cell inner membrane. It catalyses the reaction a plastoquinone + NADH + (n+1) H(+)(in) = a plastoquinol + NAD(+) + n H(+)(out). The catalysed reaction is a plastoquinone + NADPH + (n+1) H(+)(in) = a plastoquinol + NADP(+) + n H(+)(out). Its function is as follows. NDH-1 shuttles electrons from an unknown electron donor, via FMN and iron-sulfur (Fe-S) centers, to quinones in the respiratory and/or the photosynthetic chain. The immediate electron acceptor for the enzyme in this species is believed to be plastoquinone. Couples the redox reaction to proton translocation, and thus conserves the redox energy in a proton gradient. The polypeptide is NAD(P)H-quinone oxidoreductase subunit I (Gloeobacter violaceus (strain ATCC 29082 / PCC 7421)).